Consider the following 772-residue polypeptide: Larval serum protein 1 gamma chain (772 aa).

The N-terminal stretch at 1–16 (MKLTLVILALVACVTA) is a signal peptide. Residue Asn-242 is glycosylated (N-linked (GlcNAc...) asparagine).

Belongs to the hemocyanin family. In terms of assembly, heterohexamer, composed of three subunits, alpha, beta and gamma. As to expression, larval hemolymph.

The protein localises to the secreted. Its subcellular location is the extracellular space. Functionally, larval storage protein (LSP) which may serve as a store of amino acids for synthesis of adult proteins. The polypeptide is Larval serum protein 1 gamma chain (Lsp1gamma) (Drosophila melanogaster (Fruit fly)).